We begin with the raw amino-acid sequence, 142 residues long: U1 small nuclear ribonucleoprotein C (142 aa).

The segment at 4–36 (YYCDYCDTFLTHDSPSVRKTHNGGRKHKDNVRM) adopts a Matrin-type zinc-finger fold.

This sequence belongs to the U1 small nuclear ribonucleoprotein C family. U1 snRNP is composed of the 7 core Sm proteins B/B', D1, D2, D3, E, F and G that assemble in a heptameric protein ring on the Sm site of the small nuclear RNA to form the core snRNP, and at least 3 U1 snRNP-specific proteins U1-70K, U1-A and U1-C. U1-C interacts with U1 snRNA and the 5' splice-site region of the pre-mRNA.

The protein resides in the nucleus. Its function is as follows. Component of the spliceosomal U1 snRNP, which is essential for recognition of the pre-mRNA 5' splice-site and the subsequent assembly of the spliceosome. U1-C is directly involved in initial 5' splice-site recognition for both constitutive and regulated alternative splicing. The interaction with the 5' splice-site seems to precede base-pairing between the pre-mRNA and the U1 snRNA. Stimulates commitment or early (E) complex formation by stabilizing the base pairing of the 5' end of the U1 snRNA and the 5' splice-site region. The chain is U1 small nuclear ribonucleoprotein C from Caenorhabditis briggsae.